We begin with the raw amino-acid sequence, 623 residues long: MAU2 chromatid cohesion factor homolog (623 aa).

TPR repeat units follow at residues 96–129 (FDTA…SQNN), 451–484 (GGFY…ANAE), and 491–524 (SCSL…ASKI).

This sequence belongs to the SCC4/mau-2 family. Interacts with Nipped-B to form the cohesin loading complex.

The protein resides in the nucleus. Its subcellular location is the nucleoplasm. Required for association of the cohesin complex with chromatin during interphase. Plays a role in sister chromatid cohesion and normal progression through prometaphase. The protein is MAU2 chromatid cohesion factor homolog of Drosophila grimshawi (Hawaiian fruit fly).